Here is a 401-residue protein sequence, read N- to C-terminus: L-rhamnonate dehydratase (401 aa).

Substrate contacts are provided by histidine 29 and arginine 55. Aspartate 222, glutamate 248, and glutamate 276 together coordinate Mg(2+). Histidine 325 acts as the Proton acceptor in catalysis. Glutamate 345 is a binding site for substrate.

The protein belongs to the mandelate racemase/muconate lactonizing enzyme family. RhamD subfamily. As to quaternary structure, homooctamer; tetramer of dimers. Mg(2+) is required as a cofactor.

The catalysed reaction is L-rhamnonate = 2-dehydro-3-deoxy-L-rhamnonate + H2O. Catalyzes the dehydration of L-rhamnonate to 2-keto-3-deoxy-L-rhamnonate (KDR). This Tolumonas auensis (strain DSM 9187 / NBRC 110442 / TA 4) protein is L-rhamnonate dehydratase.